The chain runs to 953 residues: Catenin alpha-2 (953 aa).

T632 is modified (phosphothreonine). Phosphoserine occurs at positions 640, 651, and 901. The segment covering 912 to 927 (EKKPLVKREKPEEFQT) has biased composition (basic and acidic residues). The interval 912–939 (EKKPLVKREKPEEFQTRVRRGSQKKHIS) is disordered. Positions 928–938 (RVRRGSQKKHI) are enriched in basic residues. S939 carries the phosphoserine modification.

This sequence belongs to the vinculin/alpha-catenin family. As to quaternary structure, interacts with CDH1 and CDH2. Interacts with ZNF639; recruits CTNNA2 to the nucleus. Interacts with F-actin. In terms of tissue distribution, expressed almost exclusively in the nervous system.

It is found in the cell membrane. It localises to the cytoplasm. The protein localises to the cytoskeleton. Its subcellular location is the cell junction. The protein resides in the adherens junction. It is found in the cell projection. It localises to the axon. The protein localises to the nucleus. In terms of biological role, may function as a linker between cadherin adhesion receptors and the cytoskeleton to regulate cell-cell adhesion and differentiation in the nervous system. Required for proper regulation of cortical neuronal migration and neurite growth. It acts as a negative regulator of Arp2/3 complex activity and Arp2/3-mediated actin polymerization. It thereby suppresses excessive actin branching which would impair neurite growth and stability. Regulates morphological plasticity of synapses and cerebellar and hippocampal lamination during development. Functions in the control of startle modulation. In Mus musculus (Mouse), this protein is Catenin alpha-2 (Ctnna2).